Here is a 311-residue protein sequence, read N- to C-terminus: tRNA dimethylallyltransferase (311 aa).

Position 12-19 (12-19 (GPTASGKT)) interacts with ATP. 14 to 19 (TASGKT) provides a ligand contact to substrate. Interaction with substrate tRNA stretches follow at residues 37 to 40 (DSAL), 161 to 165 (QRINR), and 241 to 246 (RCVGYR).

This sequence belongs to the IPP transferase family. As to quaternary structure, monomer. It depends on Mg(2+) as a cofactor.

The enzyme catalyses adenosine(37) in tRNA + dimethylallyl diphosphate = N(6)-dimethylallyladenosine(37) in tRNA + diphosphate. Catalyzes the transfer of a dimethylallyl group onto the adenine at position 37 in tRNAs that read codons beginning with uridine, leading to the formation of N6-(dimethylallyl)adenosine (i(6)A). The sequence is that of tRNA dimethylallyltransferase from Histophilus somni (strain 129Pt) (Haemophilus somnus).